The following is a 602-amino-acid chain: Elongation factor 4 (602 aa).

The tr-type G domain maps to 7-189; it reads RNIRNFSIIA…AIVQRIPAPQ (183 aa). GTP is bound by residues 19 to 24 and 136 to 139; these read DHGKST and NKID.

This sequence belongs to the TRAFAC class translation factor GTPase superfamily. Classic translation factor GTPase family. LepA subfamily.

It localises to the cell inner membrane. The catalysed reaction is GTP + H2O = GDP + phosphate + H(+). In terms of biological role, required for accurate and efficient protein synthesis under certain stress conditions. May act as a fidelity factor of the translation reaction, by catalyzing a one-codon backward translocation of tRNAs on improperly translocated ribosomes. Back-translocation proceeds from a post-translocation (POST) complex to a pre-translocation (PRE) complex, thus giving elongation factor G a second chance to translocate the tRNAs correctly. Binds to ribosomes in a GTP-dependent manner. The sequence is that of Elongation factor 4 from Xylella fastidiosa (strain M12).